Here is a 417-residue protein sequence, read N- to C-terminus: Probable diacetyl reductase [(R)-acetoin forming] 2 (417 aa).

Cys39 serves as a coordination point for Zn(2+). Ser63 is modified (phosphoserine). Residues His64, Cys120, Cys123, Cys131, and Gln173 each contribute to the Zn(2+) site. Residues 380–417 are disordered; it reads GELNREADNEKKEISELSSRKDQERLRESINEAKLRHT. Basic and acidic residues predominate over residues 381-417; it reads ELNREADNEKKEISELSSRKDQERLRESINEAKLRHT.

Belongs to the zinc-containing alcohol dehydrogenase family. Zn(2+) serves as cofactor.

Its subcellular location is the cytoplasm. It is found in the nucleus. It carries out the reaction (R)-acetoin + NAD(+) = diacetyl + NADH + H(+). Its function is as follows. Catalyzes the irreversible reduction of 2,3-butanediol to (S)-acetoin in the presence of NADH. The chain is Probable diacetyl reductase [(R)-acetoin forming] 2 (BDH2) from Saccharomyces cerevisiae (strain ATCC 204508 / S288c) (Baker's yeast).